A 355-amino-acid chain; its full sequence is N-acetyl-gamma-glutamyl-phosphate reductase (355 aa).

The active site involves Cys152.

The protein belongs to the NAGSA dehydrogenase family. Type 1 subfamily.

The protein localises to the cytoplasm. The catalysed reaction is N-acetyl-L-glutamate 5-semialdehyde + phosphate + NADP(+) = N-acetyl-L-glutamyl 5-phosphate + NADPH + H(+). Its pathway is amino-acid biosynthesis; L-arginine biosynthesis; N(2)-acetyl-L-ornithine from L-glutamate: step 3/4. Catalyzes the NADPH-dependent reduction of N-acetyl-5-glutamyl phosphate to yield N-acetyl-L-glutamate 5-semialdehyde. The protein is N-acetyl-gamma-glutamyl-phosphate reductase of Psychrobacter cryohalolentis (strain ATCC BAA-1226 / DSM 17306 / VKM B-2378 / K5).